The chain runs to 406 residues: Tryptophan 2,3-dioxygenase (406 aa).

A Phosphoserine modification is found at serine 19. Residues 72–76 and arginine 144 each bind substrate; that span reads FIITH. Histidine 328 provides a ligand contact to heme. Threonine 342 serves as a coordination point for substrate.

Belongs to the tryptophan 2,3-dioxygenase family. Homotetramer. Dimer of dimers. The cofactor is heme.

The enzyme catalyses L-tryptophan + O2 = N-formyl-L-kynurenine. It participates in amino-acid degradation; L-tryptophan degradation via kynurenine pathway; L-kynurenine from L-tryptophan: step 1/2. Heme-dependent dioxygenase that catalyzes the oxidative cleavage of the L-tryptophan (L-Trp) pyrrole ring and converts L-tryptophan to N-formyl-L-kynurenine. Catalyzes the oxidative cleavage of the indole moiety. The chain is Tryptophan 2,3-dioxygenase from Mus musculus (Mouse).